The following is a 121-amino-acid chain: Small ribosomal subunit protein bS6m (121 aa).

It belongs to the bacterial ribosomal protein bS6 family. In terms of assembly, component of the mitochondrial ribosome small subunit (28S) which comprises a 12S rRNA and about 30 distinct proteins.

Its subcellular location is the mitochondrion. This Gallus gallus (Chicken) protein is Small ribosomal subunit protein bS6m (MRPS6).